The following is a 134-amino-acid chain: MAKSTIQESVATGRRKQAVSSVRLRPGSGKIDVNGKSFEDYFPLEIQRTTILSPLKKITEDQSQYDLIIRVSGGGIQGQVIATRLGLARALLKENEENRQDLKSCGFLTRDPRKKERKKYGHKKARKSFQFSKR.

The interval 97–134 (ENRQDLKSCGFLTRDPRKKERKKYGHKKARKSFQFSKR) is disordered. The segment covering 115 to 134 (KERKKYGHKKARKSFQFSKR) has biased composition (basic residues).

This sequence belongs to the universal ribosomal protein uS9 family.

The chain is Small ribosomal subunit protein uS9 (rpsI) from Chlamydia pneumoniae (Chlamydophila pneumoniae).